The sequence spans 64 residues: Arasin 1 (64 aa).

A signal peptide spans M1–P25. Positions E22–P43 are disordered. Residues S26 to R48 are pro/Arg-rich region responsible for antibacterial and antifungal activity. Pro residues predominate over residues P31–P43. The tract at residues P49–W62 is cystein-containing C-terminal region important for stability but not essential for antimicrobial activity. 2 disulfide bridges follow: C50-C59 and C52-C57. A propeptide spanning residues R63–H64 is cleaved from the precursor.

As to quaternary structure, interacts with chitin through the N-terminal region (26-48). This interaction may be important, since chitin is a component of the fungal cell wall, as well as of the crab exoskeleton (permitting a possible action of arasin in wound healing in case of lesions). Post-translationally, disulfide bonds are important for activity especially against Gram-negative bacteria, since the linearization of the peptide causes a strong decrease of activity on these bacteria. Mainly expressed in hemocytes. No or very low expression in heart, gills, inestines, and epidermis.

In terms of biological role, antimicrobial peptide that has a large activity spectrum with activity against Gram-positive, Gram-negative bacteria, as well as against fungi. Shows activity at micromolar concentrations. Displays minimal inhibitory concentration (MIC) values lower than minimal bactericidal concentrations (MBC). Synthetic peptides with similar activities than the full length peptide (composed of the first 23 or 25 amino acids (Arasin 1(26-48) or Arasin 1(26-50))) may have a dual mode of action depending on the peptide concentrations. At MIC concentrations, the peptide penetrates into the cytoplasm of target cells (tested on the Gram-negative E.coli). The two inner membrane proteins YgdD and SbmA may be required for this uptake. At concentrations higher than MIC, arasin may act by disrupting membranes. Full-length and N-terminal peptides do not show hemolytic activity. The chain is Arasin 1 from Hyas araneus (Atlantic lyre crab).